The chain runs to 125 residues: Small ribosomal subunit protein uS12 (125 aa).

Residue D89 is modified to 3-methylthioaspartic acid. Residues 101 to 125 (SLDTAGVKDRKQSRSKYGAKRPKKA) form a disordered region. Residues 113-125 (SRSKYGAKRPKKA) are compositionally biased toward basic residues.

Belongs to the universal ribosomal protein uS12 family. Part of the 30S ribosomal subunit. Contacts proteins S8 and S17. May interact with IF1 in the 30S initiation complex.

With S4 and S5 plays an important role in translational accuracy. Its function is as follows. Interacts with and stabilizes bases of the 16S rRNA that are involved in tRNA selection in the A site and with the mRNA backbone. Located at the interface of the 30S and 50S subunits, it traverses the body of the 30S subunit contacting proteins on the other side and probably holding the rRNA structure together. The combined cluster of proteins S8, S12 and S17 appears to hold together the shoulder and platform of the 30S subunit. The protein is Small ribosomal subunit protein uS12 of Thiobacillus denitrificans (strain ATCC 25259 / T1).